Consider the following 469-residue polypeptide: 3-isopropylmalate dehydratase large subunit (469 aa).

The [4Fe-4S] cluster site is built by Cys-347, Cys-410, and Cys-413.

This sequence belongs to the aconitase/IPM isomerase family. LeuC type 1 subfamily. Heterodimer of LeuC and LeuD. The cofactor is [4Fe-4S] cluster.

The enzyme catalyses (2R,3S)-3-isopropylmalate = (2S)-2-isopropylmalate. It participates in amino-acid biosynthesis; L-leucine biosynthesis; L-leucine from 3-methyl-2-oxobutanoate: step 2/4. Functionally, catalyzes the isomerization between 2-isopropylmalate and 3-isopropylmalate, via the formation of 2-isopropylmaleate. This is 3-isopropylmalate dehydratase large subunit from Cupriavidus pinatubonensis (strain JMP 134 / LMG 1197) (Cupriavidus necator (strain JMP 134)).